A 372-amino-acid chain; its full sequence is UDP-N-acetylglucosamine--N-acetylmuramyl-(pentapeptide) pyrophosphoryl-undecaprenol N-acetylglucosamine transferase (372 aa).

Residues 16 to 18 (TGG), asparagine 128, arginine 164, serine 192, isoleucine 250, and glutamine 295 contribute to the UDP-N-acetyl-alpha-D-glucosamine site.

This sequence belongs to the glycosyltransferase 28 family. MurG subfamily.

The protein resides in the cell inner membrane. The enzyme catalyses di-trans,octa-cis-undecaprenyl diphospho-N-acetyl-alpha-D-muramoyl-L-alanyl-D-glutamyl-meso-2,6-diaminopimeloyl-D-alanyl-D-alanine + UDP-N-acetyl-alpha-D-glucosamine = di-trans,octa-cis-undecaprenyl diphospho-[N-acetyl-alpha-D-glucosaminyl-(1-&gt;4)]-N-acetyl-alpha-D-muramoyl-L-alanyl-D-glutamyl-meso-2,6-diaminopimeloyl-D-alanyl-D-alanine + UDP + H(+). Its pathway is cell wall biogenesis; peptidoglycan biosynthesis. Cell wall formation. Catalyzes the transfer of a GlcNAc subunit on undecaprenyl-pyrophosphoryl-MurNAc-pentapeptide (lipid intermediate I) to form undecaprenyl-pyrophosphoryl-MurNAc-(pentapeptide)GlcNAc (lipid intermediate II). The protein is UDP-N-acetylglucosamine--N-acetylmuramyl-(pentapeptide) pyrophosphoryl-undecaprenol N-acetylglucosamine transferase of Paraburkholderia xenovorans (strain LB400).